Consider the following 361-residue polypeptide: MARSGLEPQTVTDATPLLGRSLPELQDWVVAQGQPSYRAKQLYQWLYERSIHNLAEISVFPKAWRQSLQAVPVGRSQIVDRSVSPSGTIKYLLRLHDGEIIEAVGIPSGDRLTVCVSSQLGCAMACDFCATGKGGFRRHLAPHEIIDQVLTVQEDWQQRVSNIVFMGMGEPLLNLDAVLAAIRCLNQDIGIGQRGITVSTVGIPGHIRRLAETKRVGDRPLQFTLAVSLHAPNQAIRDRLIPSSRHYPITDLLQECRDYVQITGRRVTFEYILLAGLNDQPEQAEQLAQLLRGFQSHVNLIPYNPIDEVEYQRPSKARVDAFADALRQQRVAVTVRWSKGLGADAACGQLRANRSTATLPA.

Residue Glu-102 is the Proton acceptor of the active site. The region spanning 108–344 (SGDRLTVCVS…VRWSKGLGAD (237 aa)) is the Radical SAM core domain. An intrachain disulfide couples Cys-115 to Cys-347. Cys-122, Cys-126, and Cys-129 together coordinate [4Fe-4S] cluster. S-adenosyl-L-methionine is bound by residues 169-170 (GE), Ser-199, 228-230 (SLH), and Asn-304. Catalysis depends on Cys-347, which acts as the S-methylcysteine intermediate.

Belongs to the radical SAM superfamily. RlmN family. It depends on [4Fe-4S] cluster as a cofactor.

The protein resides in the cytoplasm. The enzyme catalyses adenosine(2503) in 23S rRNA + 2 reduced [2Fe-2S]-[ferredoxin] + 2 S-adenosyl-L-methionine = 2-methyladenosine(2503) in 23S rRNA + 5'-deoxyadenosine + L-methionine + 2 oxidized [2Fe-2S]-[ferredoxin] + S-adenosyl-L-homocysteine. The catalysed reaction is adenosine(37) in tRNA + 2 reduced [2Fe-2S]-[ferredoxin] + 2 S-adenosyl-L-methionine = 2-methyladenosine(37) in tRNA + 5'-deoxyadenosine + L-methionine + 2 oxidized [2Fe-2S]-[ferredoxin] + S-adenosyl-L-homocysteine. Its function is as follows. Specifically methylates position 2 of adenine 2503 in 23S rRNA and position 2 of adenine 37 in tRNAs. This chain is Probable dual-specificity RNA methyltransferase RlmN, found in Synechococcus elongatus (strain ATCC 33912 / PCC 7942 / FACHB-805) (Anacystis nidulans R2).